Here is a 245-residue protein sequence, read N- to C-terminus: 1-(5-phosphoribosyl)-5-[(5-phosphoribosylamino)methylideneamino] imidazole-4-carboxamide isomerase (245 aa).

Asp7 (proton acceptor) is an active-site residue. The Proton donor role is filled by Asp129.

It belongs to the HisA/HisF family.

The protein localises to the cytoplasm. The catalysed reaction is 1-(5-phospho-beta-D-ribosyl)-5-[(5-phospho-beta-D-ribosylamino)methylideneamino]imidazole-4-carboxamide = 5-[(5-phospho-1-deoxy-D-ribulos-1-ylimino)methylamino]-1-(5-phospho-beta-D-ribosyl)imidazole-4-carboxamide. It functions in the pathway amino-acid biosynthesis; L-histidine biosynthesis; L-histidine from 5-phospho-alpha-D-ribose 1-diphosphate: step 4/9. This is 1-(5-phosphoribosyl)-5-[(5-phosphoribosylamino)methylideneamino] imidazole-4-carboxamide isomerase from Shewanella baltica (strain OS223).